The following is a 473-amino-acid chain: Cucurbitadienol 11-hydroxylase (473 aa).

A helical transmembrane segment spans residues 4-24 (VVLGLATLFVAYYIHWINKWR). Heme is bound at residue Cys422.

This sequence belongs to the cytochrome P450 family. The cofactor is heme. In terms of tissue distribution, highly expressed in young fruits 15 days after anthesis (15-DAA). Also observed in roots.

The protein resides in the membrane. It carries out the reaction cucurbitadienol + 2 reduced [NADPH--hemoprotein reductase] + 2 O2 = 11-oxocucurbitadienol + 2 oxidized [NADPH--hemoprotein reductase] + 3 H2O + 2 H(+). The catalysed reaction is cucurbitadienol + reduced [NADPH--hemoprotein reductase] + O2 = 11-hydroxycucurbitadienol + oxidized [NADPH--hemoprotein reductase] + H2O + H(+). It catalyses the reaction 11-hydroxycucurbitadienol + reduced [NADPH--hemoprotein reductase] + O2 = 11-oxocucurbitadienol + oxidized [NADPH--hemoprotein reductase] + 2 H2O + H(+). The enzyme catalyses (24R)-24,25-dihydroxycucurbitadienol + reduced [NADPH--hemoprotein reductase] + O2 = mogrol + oxidized [NADPH--hemoprotein reductase] + H2O + H(+). It functions in the pathway secondary metabolite biosynthesis; terpenoid biosynthesis. Functionally, hydroxylase involved in the biosynthesis of cucurbitacin and mogroside tetracyclic triterpene natural products (e.g. siamenoside I and mogrosides IV, V and VI). Cucurbitacins have cytotoxic properties and exhibit deterrent taste as a defense barrier against herbivores. Mogrosides are nonsugar highly oxygenated compounds used as high-intensity zero-calorie sweeteners; they also possess pharmacological properties such as regulating immunity, lowering blood sugar and lipid levels, protecting the liver, and acting as antioxidants and antitumor agents. Catalyzes the oxidation of cucurbitadienol at the C-11 position to produce 11-oxocucurbitadienol, a possible biosynthetic intermediate from cucurbitadienol to mogrol. Also mediates the conversion of 24,25-dihydroxycucurbitadienol to mogrol. This Siraitia grosvenorii (Monk's fruit) protein is Cucurbitadienol 11-hydroxylase.